The primary structure comprises 515 residues: MTDRVIIFDTTLRDGEQALKASLTVKEKLQIALALERLGVDVMEVGFPVSSQGDFESVQTIARHIKNARVAALSRAVDKDIDAAYEALKVAEAFRIHTFIASSALHVEAKLKRSFDDVVGMAVAAVKRARNYTDDVEFSCEDAGRTGIDNICRIVEAAINAGATTVNIPDTVGFCLPNEYGNIIAQVRNCVPNIDKAVISVHCHNDLGMATANSLTAVQNGARQIECTINGIGERAGNTSLEEVVMAMKVRQDFMGVDTHINTQEIHRVSQMVSQLCNMPIQPNKAIVGSNAFAHSSGIHQDGMLKNKNTYEILSPETIGLKKEKLNLTARSGRAAVKGHMADMGYNEQDYDLDKLYDEFLKLADKKGQVFDYDLEALAFIDMQQGDEDRLVLDKLSAHSTKEYPATAFVQLKLDGEKLSTSSIGGNGPVDAVYNAILNLTGLEIKMSHYNLTAKGEGAEALGQVDIVVEHKGRKFHGVGLATDIVESSALALVHAINAIYRAHKVADIKNHKHH.

The region spanning 5–267 is the Pyruvate carboxyltransferase domain; the sequence is VIIFDTTLRD…DTHINTQEIH (263 aa). Mn(2+)-binding residues include aspartate 14, histidine 202, histidine 204, and asparagine 238. The segment at 392–515 is regulatory domain; that stretch reads VLDKLSAHST…VADIKNHKHH (124 aa).

It belongs to the alpha-IPM synthase/homocitrate synthase family. LeuA type 1 subfamily. As to quaternary structure, homodimer. Mn(2+) is required as a cofactor.

The protein resides in the cytoplasm. The enzyme catalyses 3-methyl-2-oxobutanoate + acetyl-CoA + H2O = (2S)-2-isopropylmalate + CoA + H(+). The protein operates within amino-acid biosynthesis; L-leucine biosynthesis; L-leucine from 3-methyl-2-oxobutanoate: step 1/4. In terms of biological role, catalyzes the condensation of the acetyl group of acetyl-CoA with 3-methyl-2-oxobutanoate (2-ketoisovalerate) to form 3-carboxy-3-hydroxy-4-methylpentanoate (2-isopropylmalate). The chain is 2-isopropylmalate synthase from Haemophilus influenzae (strain ATCC 51907 / DSM 11121 / KW20 / Rd).